The chain runs to 872 residues: Protein translocase subunit SecA (872 aa).

ATP is bound by residues Gln87, 105-109, and Asp500; that span reads GEGKT. The Zn(2+) site is built by Cys855, Cys857, Cys866, and His867.

The protein belongs to the SecA family. As to quaternary structure, monomer and homodimer. Part of the essential Sec protein translocation apparatus which comprises SecA, SecYEG and auxiliary proteins SecDF-YajC and YidC. Zn(2+) serves as cofactor.

It is found in the cell inner membrane. The protein localises to the cytoplasm. The catalysed reaction is ATP + H2O + cellular proteinSide 1 = ADP + phosphate + cellular proteinSide 2.. Its function is as follows. Part of the Sec protein translocase complex. Interacts with the SecYEG preprotein conducting channel. Has a central role in coupling the hydrolysis of ATP to the transfer of proteins into and across the cell membrane, serving both as a receptor for the preprotein-SecB complex and as an ATP-driven molecular motor driving the stepwise translocation of polypeptide chains across the membrane. This chain is Protein translocase subunit SecA, found in Anaplasma marginale (strain St. Maries).